Here is a 94-residue protein sequence, read N- to C-terminus: Small ubiquitin-related modifier 3 (94 aa).

Lys11 is covalently cross-linked (Glycyl lysine isopeptide (Lys-Gly) (interchain with G-Cter in SUMO)). Residues 15-92 (DHINLKVAGQ…IDVFQQQTGG (78 aa)) form the Ubiquitin-like domain. Residue Gly92 forms a Glycyl lysine isopeptide (Gly-Lys) (interchain with K-? in acceptor proteins) linkage. A propeptide spanning residues 93 to 94 (LC) is cleaved from the precursor.

This sequence belongs to the ubiquitin family. SUMO subfamily. As to quaternary structure, interacts with SAE2 and UBE2I. Covalently attached to a number of proteins. In terms of processing, polymeric chains can be formed through Lys-11 cross-linking. Post-translationally, cleavage of precursor form by a sentrin-specific protease is necessary for function.

The protein resides in the cytoplasm. It is found in the nucleus. The protein localises to the PML body. Ubiquitin-like protein which can be covalently attached to target lysines either as a monomer or as a lysine-linked polymer. Does not seem to be involved in protein degradation and may function as an antagonist of ubiquitin in the degradation process. Plays a role in a number of cellular processes such as nuclear transport, DNA replication and repair, mitosis and signal transduction. Covalent attachment to its substrates requires prior activation by the E1 complex SAE1-SAE2 and linkage to the E2 enzyme UBE2I. In Gallus gallus (Chicken), this protein is Small ubiquitin-related modifier 3.